A 236-amino-acid polypeptide reads, in one-letter code: Small ribosomal subunit protein uS2c (236 aa).

This sequence belongs to the universal ribosomal protein uS2 family.

Its subcellular location is the plastid. It is found in the chloroplast. The sequence is that of Small ribosomal subunit protein uS2c (rps2) from Lotus japonicus (Lotus corniculatus var. japonicus).